Consider the following 367-residue polypeptide: DNA replication and repair protein RecF (367 aa).

Residue 30–37 (GANGSGKT) participates in ATP binding.

This sequence belongs to the RecF family.

The protein resides in the cytoplasm. Its function is as follows. The RecF protein is involved in DNA metabolism; it is required for DNA replication and normal SOS inducibility. RecF binds preferentially to single-stranded, linear DNA. It also seems to bind ATP. This is DNA replication and repair protein RecF from Pseudomonas fluorescens (strain SBW25).